Consider the following 811-residue polypeptide: Beta-catenin homolog sys-1 (811 aa).

The interval 1 to 105 (MHSTGEPQRG…SRGPAAPAQN (105 aa)) is disordered. The span at 64-103 (QQQQMTPQALSTQQQQQVQQQQQRQLYSSPSPSRGPAAPA) shows a compositional bias: low complexity.

As to quaternary structure, interacts with TCF transcription factor pop-1 (via N-terminal region); interaction is direct.

Its subcellular location is the nucleus. The protein localises to the cytoplasm. It is found in the cytoplasmic granule. It localises to the cytoskeleton. The protein resides in the microtubule organizing center. Its subcellular location is the centrosome. The protein localises to the chromosome. It is found in the centromere. It localises to the kinetochore. Functionally, transcription coregulator. Part of the Wnt signaling asymmetry pathway, probably acting downstream of putative frizzled ligand mom-2, Wnt/frizzled receptors lin-17 and mom-5, and dishevelled homolog dsh-2. Activates or represses target gene expression, depending on upstream Wnt signals and interactions with transcription factors, such as pop-1. Required for the activation of Wnt-responsive genes in the E blastomere; thereby leading to a role in endoderm specification and gut development. Reciprocal distribution patterns of sys-1 and pop-1/TCF in the daughters of anterior-posterior cell divisions functions in specifying cell fate; a higher sys-1 to pop-1 ratio promotes the posterior cell fate, whereas a low sys-1 to pop-1 ratio promotes the anterior fate. Represses expression of homeobox ttx-3 in neuroblasts of the SIAD/SIBV lineage, perhaps acting by blocking its transcriptional activation by a complex consisting of ref-2 and pop-1. Required for early organization of the hermaphrodite, but not the male, gonad; involved in generation of regulatory cells, known as the distal tip cells (DTC), and in formation of the somatic gonadal primordium. Involved in regulating asymmetric divisions of the somatic gonadal precursor cells (SGP), Z1 and Z4. In Caenorhabditis elegans, this protein is Beta-catenin homolog sys-1.